A 518-amino-acid chain; its full sequence is Light-independent protochlorophyllide reductase subunit B (518 aa).

Aspartate 36 contacts [4Fe-4S] cluster. Aspartate 285 serves as the catalytic Proton donor. Substrate is bound at residue 420–421; that stretch reads GL.

Belongs to the ChlB/BchB/BchZ family. Protochlorophyllide reductase is composed of three subunits; BchL, BchN and BchB. Forms a heterotetramer of two BchB and two BchN subunits. Requires [4Fe-4S] cluster as cofactor.

The catalysed reaction is chlorophyllide a + oxidized 2[4Fe-4S]-[ferredoxin] + 2 ADP + 2 phosphate = protochlorophyllide a + reduced 2[4Fe-4S]-[ferredoxin] + 2 ATP + 2 H2O. It functions in the pathway porphyrin-containing compound metabolism; bacteriochlorophyll biosynthesis (light-independent). Functionally, component of the dark-operative protochlorophyllide reductase (DPOR) that uses Mg-ATP and reduced ferredoxin to reduce ring D of protochlorophyllide (Pchlide) to form chlorophyllide a (Chlide). This reaction is light-independent. The NB-protein (BchN-BchB) is the catalytic component of the complex. The polypeptide is Light-independent protochlorophyllide reductase subunit B (Bradyrhizobium sp. (strain ORS 278)).